The chain runs to 959 residues: Glycine dehydrogenase (decarboxylating) (959 aa).

An N6-(pyridoxal phosphate)lysine modification is found at lysine 708.

The protein belongs to the GcvP family. In terms of assembly, the glycine cleavage system is composed of four proteins: P, T, L and H. Requires pyridoxal 5'-phosphate as cofactor.

It catalyses the reaction N(6)-[(R)-lipoyl]-L-lysyl-[glycine-cleavage complex H protein] + glycine + H(+) = N(6)-[(R)-S(8)-aminomethyldihydrolipoyl]-L-lysyl-[glycine-cleavage complex H protein] + CO2. Functionally, the glycine cleavage system catalyzes the degradation of glycine. The P protein binds the alpha-amino group of glycine through its pyridoxal phosphate cofactor; CO(2) is released and the remaining methylamine moiety is then transferred to the lipoamide cofactor of the H protein. This Yersinia enterocolitica serotype O:8 / biotype 1B (strain NCTC 13174 / 8081) protein is Glycine dehydrogenase (decarboxylating).